The chain runs to 276 residues: Putative metal-binding protein TC_0696 (276 aa).

The signal sequence occupies residues methionine 1–glycine 18. A divalent metal cation contacts are provided by histidine 59, histidine 121, histidine 185, and aspartate 256.

This sequence belongs to the bacterial solute-binding protein 9 family.

The protein resides in the periplasm. Functionally, part of an ATP-binding cassette (ABC) transport system involved in metal import. Binds a metal with high affinity and specificity and delivers it to the membrane permease for translocation into the cytoplasm. This Chlamydia muridarum (strain MoPn / Nigg) protein is Putative metal-binding protein TC_0696.